A 93-amino-acid chain; its full sequence is Aspartyl/glutamyl-tRNA(Asn/Gln) amidotransferase subunit C (93 aa).

It belongs to the GatC family. In terms of assembly, heterotrimer of A, B and C subunits.

The catalysed reaction is L-glutamyl-tRNA(Gln) + L-glutamine + ATP + H2O = L-glutaminyl-tRNA(Gln) + L-glutamate + ADP + phosphate + H(+). The enzyme catalyses L-aspartyl-tRNA(Asn) + L-glutamine + ATP + H2O = L-asparaginyl-tRNA(Asn) + L-glutamate + ADP + phosphate + 2 H(+). Functionally, allows the formation of correctly charged Asn-tRNA(Asn) or Gln-tRNA(Gln) through the transamidation of misacylated Asp-tRNA(Asn) or Glu-tRNA(Gln) in organisms which lack either or both of asparaginyl-tRNA or glutaminyl-tRNA synthetases. The reaction takes place in the presence of glutamine and ATP through an activated phospho-Asp-tRNA(Asn) or phospho-Glu-tRNA(Gln). The chain is Aspartyl/glutamyl-tRNA(Asn/Gln) amidotransferase subunit C from Helicobacter pylori (strain HPAG1).